The following is a 105-amino-acid chain: MGTNQILDEIREVNLSYLLLAQQMLREDRIAAMYRLGIDEDIADILVKLTNSQLLKMAGSNMLLCRFRFDDSLIAEILTSHKQDRALTQSHAAILMAGLPAEKIS.

The protein belongs to the FlhD family. In terms of assembly, homodimer; disulfide-linked. Forms a heterohexamer composed of two FlhC and four FlhD subunits. Each FlhC binds a FlhD dimer, forming a heterotrimer, and a hexamer assembles by dimerization of two heterotrimers.

The protein resides in the cytoplasm. Functionally, functions in complex with FlhC as a master transcriptional regulator that regulates transcription of several flagellar and non-flagellar operons by binding to their promoter region. Activates expression of class 2 flagellar genes, including fliA, which is a flagellum-specific sigma factor that turns on the class 3 genes. Also regulates genes whose products function in a variety of physiological pathways. This chain is Flagellar transcriptional regulator FlhD, found in Nitrosomonas europaea (strain ATCC 19718 / CIP 103999 / KCTC 2705 / NBRC 14298).